A 489-amino-acid polypeptide reads, in one-letter code: uncharacterized protein (489 aa).

Transmembrane regions (helical) follow at residues 1–21 (MNAA…LGIR), 40–60 (FGTV…FTFL), 74–94 (FYII…LPAV), 117–137 (PLLG…YLVL), 158–178 (AAIW…GIHG), 188–208 (IMIL…YYGG), 234–254 (AWFS…PHTF), 271–291 (IIMP…FAAI), 318–338 (FVGI…SMIL), 362–382 (VSAL…YFTF), 388–408 (IVTL…ALLF), 422–442 (FAGI…ETTI), and 456–476 (LNVG…VSLM).

This sequence belongs to the sodium:solute symporter (SSF) (TC 2.A.21) family.

The protein resides in the cell membrane. This is an uncharacterized protein from Bacillus subtilis (strain 168).